The primary structure comprises 690 residues: Eukaryotic translation initiation factor 3 subunit B (690 aa).

Residues 1 to 11 (MAKKKSEEHSG) are compositionally biased toward basic and acidic residues. The disordered stretch occupies residues 1–33 (MAKKKSEEHSGTDANDSDYQEEPNFDDPPGFVD). Residues 15–25 (NDSDYQEEPNF) show a composition bias toward acidic residues. An RRM domain is found at 57–141 (SVVVVDNIPK…HTFAVNLFTD (85 aa)). WD repeat units follow at residues 207 to 246 (TRERFTDTFVKWSPLGTYVVTFHKPGVAIWGGSSFQKIQK), 293 to 331 (DGMSVLSMFRWSHDDKFVARMGENSIHIYETPSFYLLDL), 334 to 369 (IKIPGIRGFSWSPTDNVIAYWVEEQNQIPARVTLME), 442 to 484 (EIRE…KPSL), and 530 to 575 (PDHF…IKRT). A coiled-coil region spans residues 595 to 645 (EEKQKEIKKNLKKYYAAFEQKDRLRLTRASKELLEKRSQLRETFMEYRNKR).

This sequence belongs to the eIF-3 subunit B family. Component of the eukaryotic translation initiation factor 3 (eIF-3) complex. The eIF-3 complex interacts with pix. Interacts with mxt.

The protein localises to the cytoplasm. RNA-binding component of the eukaryotic translation initiation factor 3 (eIF-3) complex, which is involved in protein synthesis of a specialized repertoire of mRNAs and, together with other initiation factors, stimulates binding of mRNA and methionyl-tRNAi to the 40S ribosome. The eIF-3 complex specifically targets and initiates translation of a subset of mRNAs involved in cell proliferation. In Drosophila melanogaster (Fruit fly), this protein is Eukaryotic translation initiation factor 3 subunit B.